The chain runs to 232 residues: Ureidoacrylate amidohydrolase RutB (232 aa).

The active-site Proton acceptor is D26. Residue K135 is part of the active site. C168 serves as the catalytic Nucleophile.

It belongs to the isochorismatase family. RutB subfamily.

The enzyme catalyses (Z)-3-ureidoacrylate + H2O + H(+) = (Z)-3-aminoacrylate + NH4(+) + CO2. The catalysed reaction is (Z)-3-ureidoacrylate + H2O = (Z)-3-aminoacrylate + carbamate + H(+). It catalyses the reaction (Z)-2-methylureidoacrylate + H2O + H(+) = (Z)-2-methylaminoacrylate + NH4(+) + CO2. In terms of biological role, hydrolyzes ureidoacrylate to form aminoacrylate and carbamate. The carbamate hydrolyzes spontaneously, thereby releasing one of the nitrogen atoms of the pyrimidine ring as ammonia and one of its carbon atoms as CO2. This is Ureidoacrylate amidohydrolase RutB from Cronobacter sakazakii (strain ATCC BAA-894) (Enterobacter sakazakii).